The sequence spans 164 residues: Nucleotide-binding protein Emin_0136 (164 aa).

It belongs to the YajQ family.

Its function is as follows. Nucleotide-binding protein. The polypeptide is Nucleotide-binding protein Emin_0136 (Elusimicrobium minutum (strain Pei191)).